Consider the following 354-residue polypeptide: 5,10-methenyltetrahydromethanopterin hydrogenase (354 aa).

The protein belongs to the HMD family.

It catalyses the reaction 5,10-methenyl-5,6,7,8-tetrahydromethanopterin + H2 = 5,10-methylenetetrahydromethanopterin + H(+). It functions in the pathway one-carbon metabolism; methanogenesis from CO(2); 5,10-methylene-5,6,7,8-tetrahydromethanopterin from 5,10-methenyl-5,6,7,8-tetrahydromethanopterin (hydrogen route): step 1/1. Functionally, catalyzes the reversible reduction of methenyl-H(4)MPT(+) to methylene-H(4)MPT. This chain is 5,10-methenyltetrahydromethanopterin hydrogenase, found in Methanococcus maripaludis (strain DSM 14266 / JCM 13030 / NBRC 101832 / S2 / LL).